A 247-amino-acid polypeptide reads, in one-letter code: ATP synthase subunit a (247 aa).

6 helical membrane-spanning segments follow: residues 24–44, 82–102, 112–132, 141–161, 194–214, and 219–239; these read IAFT…SLLM, FFPF…VGII, IIVT…YGFY, LFVP…IEVI, MLGA…ALVV, and LELL…CIYI.

Belongs to the ATPase A chain family. In terms of assembly, F-type ATPases have 2 components, CF(1) - the catalytic core - and CF(0) - the membrane proton channel. CF(1) has five subunits: alpha(3), beta(3), gamma(1), delta(1), epsilon(1). CF(0) has three main subunits: a(1), b(2) and c(9-12). The alpha and beta chains form an alternating ring which encloses part of the gamma chain. CF(1) is attached to CF(0) by a central stalk formed by the gamma and epsilon chains, while a peripheral stalk is formed by the delta and b chains.

It is found in the cell inner membrane. Its function is as follows. Key component of the proton channel; it plays a direct role in the translocation of protons across the membrane. In Nitrobacter winogradskyi (strain ATCC 25391 / DSM 10237 / CIP 104748 / NCIMB 11846 / Nb-255), this protein is ATP synthase subunit a.